A 1145-amino-acid chain; its full sequence is Error-prone DNA polymerase (1145 aa).

The protein belongs to the DNA polymerase type-C family. DnaE2 subfamily.

It localises to the cytoplasm. It carries out the reaction DNA(n) + a 2'-deoxyribonucleoside 5'-triphosphate = DNA(n+1) + diphosphate. Its function is as follows. DNA polymerase involved in damage-induced mutagenesis and translesion synthesis (TLS). It is not the major replicative DNA polymerase. This Rhodopirellula baltica (strain DSM 10527 / NCIMB 13988 / SH1) protein is Error-prone DNA polymerase.